A 264-amino-acid polypeptide reads, in one-letter code: tRNA pseudouridine synthase A (264 aa).

The Nucleophile role is filled by Asp54. Tyr113 serves as a coordination point for substrate.

It belongs to the tRNA pseudouridine synthase TruA family. Homodimer.

The catalysed reaction is uridine(38/39/40) in tRNA = pseudouridine(38/39/40) in tRNA. Its function is as follows. Formation of pseudouridine at positions 38, 39 and 40 in the anticodon stem and loop of transfer RNAs. The protein is tRNA pseudouridine synthase A of Leptospira biflexa serovar Patoc (strain Patoc 1 / Ames).